The primary structure comprises 165 residues: Pro-MCH (165 aa).

The N-terminal stretch at 1–21 (MAKMSLSSYLLILTFSLFSQG) is a signal peptide. The interval 68-88 (NDDSSFMNDEENKNSKNTGSK) is disordered. Ile143 carries the isoleucine amide modification. An intrachain disulfide couples Cys153 to Cys162.

The protein belongs to the melanin-concentrating hormone family. In terms of processing, pro-MCH is processed differentially in the brain and in peripheral organs producing two neuropeptides; NEI and MCH. A third peptide, NGE, may also be produced. Preferential processing in neurons by prohormone convertase 2 (PC2) generates NEI. MCH is generated in neurons of the lateral hypothalmic area by several prohormone convertases including PC1/3, PC2 and PC5/6.

The protein resides in the secreted. Its function is as follows. MCH may act as a neurotransmitter or neuromodulator in a broad array of neuronal functions directed toward the regulation of goal-directed behavior, such as food intake, and general arousal. The protein is Pro-MCH (PMCH) of Canis lupus familiaris (Dog).